A 334-amino-acid chain; its full sequence is Glycerol-3-phosphate dehydrogenase [NAD(P)+] (334 aa).

NADPH contacts are provided by Ser-14, Tyr-15, Arg-35, and Lys-109. Sn-glycerol 3-phosphate contacts are provided by Lys-109, Gly-138, and Thr-140. An NADPH-binding site is contributed by Ala-142. The sn-glycerol 3-phosphate site is built by Lys-194, Asp-247, Ser-257, Arg-258, and Asn-259. Catalysis depends on Lys-194, which acts as the Proton acceptor. An NADPH-binding site is contributed by Arg-258. 2 residues coordinate NADPH: Val-282 and Glu-284.

The protein belongs to the NAD-dependent glycerol-3-phosphate dehydrogenase family.

The protein resides in the cytoplasm. It catalyses the reaction sn-glycerol 3-phosphate + NAD(+) = dihydroxyacetone phosphate + NADH + H(+). The catalysed reaction is sn-glycerol 3-phosphate + NADP(+) = dihydroxyacetone phosphate + NADPH + H(+). Its pathway is membrane lipid metabolism; glycerophospholipid metabolism. In terms of biological role, catalyzes the reduction of the glycolytic intermediate dihydroxyacetone phosphate (DHAP) to sn-glycerol 3-phosphate (G3P), the key precursor for phospholipid synthesis. The sequence is that of Glycerol-3-phosphate dehydrogenase [NAD(P)+] from Colwellia psychrerythraea (strain 34H / ATCC BAA-681) (Vibrio psychroerythus).